Consider the following 324-residue polypeptide: Acetyl-coenzyme A carboxylase carboxyl transferase subunit alpha (324 aa).

The 255-residue stretch at 37–291 (ILEEKLENLE…DLMIQKTFQQ (255 aa)) folds into the CoA carboxyltransferase C-terminal domain.

It belongs to the AccA family. As to quaternary structure, acetyl-CoA carboxylase is a heterohexamer composed of biotin carboxyl carrier protein (AccB), biotin carboxylase (AccC) and two subunits each of ACCase subunit alpha (AccA) and ACCase subunit beta (AccD).

It localises to the cytoplasm. It carries out the reaction N(6)-carboxybiotinyl-L-lysyl-[protein] + acetyl-CoA = N(6)-biotinyl-L-lysyl-[protein] + malonyl-CoA. The protein operates within lipid metabolism; malonyl-CoA biosynthesis; malonyl-CoA from acetyl-CoA: step 1/1. In terms of biological role, component of the acetyl coenzyme A carboxylase (ACC) complex. First, biotin carboxylase catalyzes the carboxylation of biotin on its carrier protein (BCCP) and then the CO(2) group is transferred by the carboxyltransferase to acetyl-CoA to form malonyl-CoA. In Bacillus cereus (strain ATCC 14579 / DSM 31 / CCUG 7414 / JCM 2152 / NBRC 15305 / NCIMB 9373 / NCTC 2599 / NRRL B-3711), this protein is Acetyl-coenzyme A carboxylase carboxyl transferase subunit alpha.